The sequence spans 327 residues: Zinc transport protein ZntB (327 aa).

Residues 1–273 are Cytoplasmic-facing; sequence MEAIKGSDVN…ARRTYTMSLM (273 aa). A helical transmembrane segment spans residues 274-294; it reads AMVFLPSTFLTGLFGVNLGGI. Residues 295-300 lie on the Periplasmic side of the membrane; it reads PGGGWR. Residues 301–321 traverse the membrane as a helical segment; sequence FGFSLFCILLVVLIGGVTLWL. Over 322-327 the chain is Cytoplasmic; the sequence is HRSKWL.

Belongs to the CorA metal ion transporter (MIT) (TC 1.A.35) family.

It localises to the cell inner membrane. It carries out the reaction Zn(2+)(out) + H(+)(out) = Zn(2+)(in) + H(+)(in). Zinc transporter. Acts as a Zn(2+):proton symporter, which likely mediates zinc ion uptake. This chain is Zinc transport protein ZntB, found in Salmonella choleraesuis (strain SC-B67).